Reading from the N-terminus, the 698-residue chain is Quillaic acid 3-O-glycosyltransferase CSL1 (698 aa).

A helical transmembrane segment spans residues Ala-14 to Tyr-34. The N-linked (GlcNAc...) asparagine glycan is linked to Asn-38. Residues Gly-42–Thr-62 form a helical membrane-spanning segment. UDP-alpha-D-glucose-binding residues include Lys-99 and Glu-100. Asp-129 is an active-site residue. N-linked (GlcNAc...) asparagine glycosylation is present at Asn-317. Ser-436 is a catalytic residue. A run of 6 helical transmembrane segments spans residues Trp-478–Ser-498, Tyr-508–Leu-528, Trp-546–Leu-566, Ile-581–Lys-601, Met-636–Leu-656, and Phe-669–Ile-689.

It belongs to the glycosyltransferase 2 family. Plant cellulose synthase-like G subfamily. As to expression, mainly expressed in flowers and flower buds and, to a lesser extent, in leaves, stems and roots.

The protein resides in the golgi apparatus membrane. The protein operates within secondary metabolite biosynthesis; terpenoid biosynthesis. In terms of biological role, component of the oleanane-type triterpene saponins (e.g. saponarioside A and saponarioside B) biosynthetic pathway, leading to the production of natural products with detergent properties used as traditional sources of soap. Glycosyltransferase that mediates the conversion of quillaic acid (QA) to QA-mono via the initiation of the C-3 sugar chain. This is Quillaic acid 3-O-glycosyltransferase CSL1 from Saponaria officinalis (Common soapwort).